A 144-amino-acid polypeptide reads, in one-letter code: Large ribosomal subunit protein uL16 (144 aa).

Positions 1-19 are enriched in basic residues; the sequence is MLLPKRVKYRRQHRPKTTG. The tract at residues 1–23 is disordered; the sequence is MLLPKRVKYRRQHRPKTTGRSKG.

The protein belongs to the universal ribosomal protein uL16 family. In terms of assembly, part of the 50S ribosomal subunit.

Functionally, binds 23S rRNA and is also seen to make contacts with the A and possibly P site tRNAs. The sequence is that of Large ribosomal subunit protein uL16 from Staphylococcus saprophyticus subsp. saprophyticus (strain ATCC 15305 / DSM 20229 / NCIMB 8711 / NCTC 7292 / S-41).